Reading from the N-terminus, the 460-residue chain is Equilibrative nucleoside transporter 1 (460 aa).

At 1 to 12 (MTTSHQPQDRYK) the chain is on the cytoplasmic side. The helical transmembrane segment at 13–29 (AVWLIFFVLGLGTLLPW) threads the bilayer. The Extracellular segment spans residues 30 to 82 (NFFMTATKYFTNRLDVSQNVSSDTDQSCESTKALADPTVALPARSSLSAIFNN). An N-linked (GlcNAc...) asparagine glycan is attached at Asn48. The helical transmembrane segment at 83–107 (VMTLCAMLPLLVFTCLNSFLHQRIS) threads the bilayer. Residues 108 to 111 (QSVR) lie on the Cytoplasmic side of the membrane. The chain crosses the membrane as a helical span at residues 112-130 (ILGSLLAILLVFLVTAALV). Topologically, residues 131–138 (KVEMDALI) are extracellular. Residues 139-157 (FFVITMIKIVLINSFGAIL) traverse the membrane as a helical segment. Over 158–174 (QASLFGLAGVLPANYTA) the chain is Cytoplasmic. The chain crosses the membrane as a helical span at residues 175 to 199 (PIMSGQGLAGFFTSVAMICAIASGS). The Extracellular portion of the chain corresponds to 200–206 (ELSESAF). The helical transmembrane segment at 207–227 (GYFITACAVVILAILCYLALP) threads the bilayer. Topologically, residues 228–291 (RTEFYRHYLQ…IKAILKSICV (64 aa)) are cytoplasmic. Position 254 is a phosphoserine (Ser254). The span at 255–266 (KGEEPKGRREES) shows a compositional bias: basic and acidic residues. Positions 255-277 (KGEEPKGRREESGVPGPNSPPTN) are disordered. Ser273 is subject to Phosphoserine. The helical transmembrane segment at 292–311 (PALSVCFIFTVTIGLFPAVT) threads the bilayer. Over 312–323 (AEVESSIAGTSP) the chain is Extracellular. A helical transmembrane segment spans residues 324–342 (WKSYFIPVACFLNFNVFDW). The Cytoplasmic segment spans residues 343-359 (LGRSLTAVCMWPGQDSR). The helical transmembrane segment at 360 to 378 (WLPVLVASRIVFIPLLMLC) threads the bilayer. The Extracellular portion of the chain corresponds to 379 to 397 (NVKARHCGAQRHHFVFKHD). A helical transmembrane segment spans residues 398 to 417 (AWFIAFMAAFAFSNGYLASL). Residues 418-435 (CMCFGPKKVKPAEAETAG) are Cytoplasmic-facing. A helical transmembrane segment spans residues 436–456 (NIMSFFLCLGLALGAVLSFLL). At 457–460 (RALV) the chain is on the extracellular side.

Belongs to the SLC29A/ENT transporter (TC 2.A.57) family. In terms of assembly, identified in a complex with STOM. Post-translationally, glycosylated. Highly expressed in heart, spleen, lung, liver and testis. Lower level of expression in brain and kidney. Expressed in adipose tissues, brown adipocytes expressing significantly higher amounts than white adipocytes. Expressed in seminiferous tubules.

The protein resides in the basolateral cell membrane. The protein localises to the apical cell membrane. It localises to the cell membrane. The enzyme catalyses adenosine(in) = adenosine(out). It catalyses the reaction guanosine(in) = guanosine(out). It carries out the reaction inosine(in) = inosine(out). The catalysed reaction is uridine(out) = uridine(in). The enzyme catalyses thymidine(in) = thymidine(out). It catalyses the reaction cytidine(in) = cytidine(out). It carries out the reaction adenine(out) = adenine(in). The catalysed reaction is guanine(out) = guanine(in). The enzyme catalyses thymine(out) = thymine(in). It catalyses the reaction uracil(in) = uracil(out). It carries out the reaction hypoxanthine(out) = hypoxanthine(in). With respect to regulation, transporter activity is sensitive to low concentrations of the inhibitor nitrobenzylmercaptopurine riboside (NBMPR). Uniporter involved in the facilitative transport of nucleosides and nucleobases, and contributes to maintaining their cellular homeostasis. Functions as a Na(+)-independent transporter. Involved in the transport of nucleosides such as adenosine, guanosine, inosine, uridine, thymidine and cytidine. Also transports purine (hypoxanthine, adenine, guanine) and pyrimidine nucleobases (thymine, uracil). Mediates basolateral nucleoside uptake into Sertoli cells, thereby regulating the transport of nucleosides in testis across the blood-testis-barrier. Regulates inosine levels in brown adipocytes tissues (BAT) and extracellular inosine levels, which controls BAT-dependent energy expenditure. This is Equilibrative nucleoside transporter 1 from Mus musculus (Mouse).